The primary structure comprises 375 residues: Chaperone protein DnaJ (375 aa).

Positions 6–71 (DYYEVLGVPK…EKRRQYDQFG (66 aa)) constitute a J domain. The CR-type zinc-finger motif lies at 138–220 (GTTKKIDVTL…CYGTGYISSK (83 aa)). Zn(2+) is bound by residues Cys151, Cys154, Cys168, Cys171, Cys194, Cys197, Cys208, and Cys211. 4 CXXCXGXG motif repeats span residues 151-158 (CSSCHGTG), 168-175 (CSKCGGRG), 194-201 (CPDCHGTG), and 208-215 (CPDCYGTG).

It belongs to the DnaJ family. Homodimer. Zn(2+) is required as a cofactor.

The protein localises to the cytoplasm. Its function is as follows. Participates actively in the response to hyperosmotic and heat shock by preventing the aggregation of stress-denatured proteins and by disaggregating proteins, also in an autonomous, DnaK-independent fashion. Unfolded proteins bind initially to DnaJ; upon interaction with the DnaJ-bound protein, DnaK hydrolyzes its bound ATP, resulting in the formation of a stable complex. GrpE releases ADP from DnaK; ATP binding to DnaK triggers the release of the substrate protein, thus completing the reaction cycle. Several rounds of ATP-dependent interactions between DnaJ, DnaK and GrpE are required for fully efficient folding. Also involved, together with DnaK and GrpE, in the DNA replication of plasmids through activation of initiation proteins. This Lachnospira eligens (strain ATCC 27750 / DSM 3376 / VPI C15-48 / C15-B4) (Eubacterium eligens) protein is Chaperone protein DnaJ.